The primary structure comprises 417 residues: MSLSNKLSVKDLDVAGKRVFIRVDFNVPLDGKTITNNQRIVAALPTIKYVEEHKPKYIVLASHLGRPNGERNDKYSLAPVATELEKLLGQKVTFLNDCVGPEVTKAVENAKDGEIFLLENLRYHIEEEGSSKDKDGKKVKADPEAVKKFRQELTSLADVYINDAFGTAHRAHSSMVGLEVPQRAAGFLMSKELEYFAKALENPERPFLAILGGAKVSDKIQLIDNLLDKVDMLIVGGGMAFTFKKILNKMPIGDSLFDEAGAKNVEHLVEKAKKNNVELILPVDFVTADKFDKDAKTSSATDAEGIPDNWMGLDCGPKSVELFQQAVAKAKTIVWNGPPGVFEFEKFANGTKSLLDAAVKSAENGNIVIIGGGDTATVAKKYGVVEKLSHVSTGGGASLELLEGKDLPGVVALSNKN.

(2R)-3-phosphoglycerate contacts are provided by Val-23, Asp-24, Phe-25, Asn-26, Gln-38, Arg-39, Ser-62, His-63, Gly-65, Arg-66, Leu-121, Arg-122, His-169, and Arg-170. Position 213 (Gly-213) interacts with ADP. Position 213 (Gly-213) interacts with CDP. 2 residues coordinate AMP: Ala-214 and Lys-215. Ala-214 is an ATP binding site. Ala-214 serves as a coordination point for Mg(2+). Asp-218 lines the CDP pocket. Asp-218 lines the Mg(2+) pocket. An AMP-binding site is contributed by Lys-219. An ATP-binding site is contributed by Lys-219. Gly-237 is a binding site for ADP. Gly-237 contributes to the CDP binding site. AMP-binding residues include Gly-238 and Gly-312. ATP is bound by residues Gly-238 and Gly-312. Positions 337 and 342 each coordinate CDP. Phe-342 is an ADP binding site. An AMP-binding site is contributed by Glu-343. 3 residues coordinate ATP: Glu-343, Asp-374, and Thr-375. Residue Asp-374 participates in Mg(2+) binding.

This sequence belongs to the phosphoglycerate kinase family. Monomer. Requires Mg(2+) as cofactor.

It is found in the cytoplasm. It localises to the secreted. The protein localises to the cell wall. Its subcellular location is the mitochondrion. The catalysed reaction is (2R)-3-phosphoglycerate + ATP = (2R)-3-phospho-glyceroyl phosphate + ADP. The protein operates within carbohydrate degradation; glycolysis; pyruvate from D-glyceraldehyde 3-phosphate: step 2/5. Catalyzes one of the two ATP producing reactions in the glycolytic pathway via the reversible conversion of 1,3-diphosphoglycerate to 3-phosphoglycerate. Both L- and D- forms of purine and pyrimidine nucleotides can be used as substrates, but the activity is much lower on pyrimidines. Negatively regulates the biosynthesis of acetyl-CoA from pyruvate in the mitochondrion. The polypeptide is Phosphoglycerate kinase (PGK1) (Candida albicans (strain SC5314 / ATCC MYA-2876) (Yeast)).